The sequence spans 154 residues: Putative pre-16S rRNA nuclease (154 aa).

It belongs to the YqgF nuclease family.

The protein localises to the cytoplasm. Its function is as follows. Could be a nuclease involved in processing of the 5'-end of pre-16S rRNA. This Rickettsia africae (strain ESF-5) protein is Putative pre-16S rRNA nuclease.